Here is a 410-residue protein sequence, read N- to C-terminus: Peptidase T (410 aa).

His79 is a binding site for Zn(2+). Residue Asp81 is part of the active site. A Zn(2+)-binding site is contributed by Asp142. Glu176 serves as the catalytic Proton acceptor. Residues Glu177, Asp199, and His381 each contribute to the Zn(2+) site.

The protein belongs to the peptidase M20B family. The cofactor is Zn(2+).

It is found in the cytoplasm. The catalysed reaction is Release of the N-terminal residue from a tripeptide.. Cleaves the N-terminal amino acid of tripeptides. The polypeptide is Peptidase T (Listeria monocytogenes serotype 4b (strain CLIP80459)).